The primary structure comprises 885 residues: Alanine--tRNA ligase (885 aa).

Zn(2+) contacts are provided by H574, H578, C676, and H680.

Belongs to the class-II aminoacyl-tRNA synthetase family. Zn(2+) serves as cofactor.

It localises to the cytoplasm. It carries out the reaction tRNA(Ala) + L-alanine + ATP = L-alanyl-tRNA(Ala) + AMP + diphosphate. In terms of biological role, catalyzes the attachment of alanine to tRNA(Ala) in a two-step reaction: alanine is first activated by ATP to form Ala-AMP and then transferred to the acceptor end of tRNA(Ala). Also edits incorrectly charged Ser-tRNA(Ala) and Gly-tRNA(Ala) via its editing domain. The polypeptide is Alanine--tRNA ligase (Syntrophobacter fumaroxidans (strain DSM 10017 / MPOB)).